Consider the following 312-residue polypeptide: Phospho-N-acetylmuramoyl-pentapeptide-transferase (312 aa).

Transmembrane regions (helical) follow at residues 1–21, 48–68, 76–96, 115–135, 140–160, 165–185, 214–234, 238–258, and 289–309; these read MMVV…HYSK, GVAF…FGGI, EVMI…DDFL, FPLQ…LASH, GFMS…FVMV, AFNF…IVLL, VFMG…AYAL, VWLL…VVIQ, and VTLR…WLMG.

Belongs to the glycosyltransferase 4 family. MraY subfamily. The cofactor is Mg(2+).

Its subcellular location is the cell membrane. The catalysed reaction is UDP-N-acetyl-alpha-D-muramoyl-L-alanyl-gamma-D-glutamyl-meso-2,6-diaminopimeloyl-D-alanyl-D-alanine + di-trans,octa-cis-undecaprenyl phosphate = di-trans,octa-cis-undecaprenyl diphospho-N-acetyl-alpha-D-muramoyl-L-alanyl-D-glutamyl-meso-2,6-diaminopimeloyl-D-alanyl-D-alanine + UMP. It functions in the pathway cell wall biogenesis; peptidoglycan biosynthesis. Catalyzes the initial step of the lipid cycle reactions in the biosynthesis of the cell wall peptidoglycan: transfers peptidoglycan precursor phospho-MurNAc-pentapeptide from UDP-MurNAc-pentapeptide onto the lipid carrier undecaprenyl phosphate, yielding undecaprenyl-pyrophosphoryl-MurNAc-pentapeptide, known as lipid I. This is Phospho-N-acetylmuramoyl-pentapeptide-transferase from Deinococcus radiodurans (strain ATCC 13939 / DSM 20539 / JCM 16871 / CCUG 27074 / LMG 4051 / NBRC 15346 / NCIMB 9279 / VKM B-1422 / R1).